Reading from the N-terminus, the 491-residue chain is Cytochrome P450 2K3 (491 aa).

Cys434 contributes to the heme binding site.

Belongs to the cytochrome P450 family. Heme serves as cofactor.

It is found in the endoplasmic reticulum membrane. Its subcellular location is the microsome membrane. The catalysed reaction is an organic molecule + reduced [NADPH--hemoprotein reductase] + O2 = an alcohol + oxidized [NADPH--hemoprotein reductase] + H2O + H(+). The polypeptide is Cytochrome P450 2K3 (cyp2k3) (Oncorhynchus mykiss (Rainbow trout)).